Consider the following 491-residue polypeptide: Protein nucleotidyltransferase YdiU (491 aa).

Positions 94, 96, 97, 117, 129, 130, 180, and 187 each coordinate ATP. D256 functions as the Proton acceptor in the catalytic mechanism. The Mg(2+) site is built by N257 and D266. D266 is a binding site for ATP.

The protein belongs to the SELO family. It depends on Mg(2+) as a cofactor. The cofactor is Mn(2+).

The catalysed reaction is L-seryl-[protein] + ATP = 3-O-(5'-adenylyl)-L-seryl-[protein] + diphosphate. The enzyme catalyses L-threonyl-[protein] + ATP = 3-O-(5'-adenylyl)-L-threonyl-[protein] + diphosphate. It carries out the reaction L-tyrosyl-[protein] + ATP = O-(5'-adenylyl)-L-tyrosyl-[protein] + diphosphate. It catalyses the reaction L-histidyl-[protein] + UTP = N(tele)-(5'-uridylyl)-L-histidyl-[protein] + diphosphate. The catalysed reaction is L-seryl-[protein] + UTP = O-(5'-uridylyl)-L-seryl-[protein] + diphosphate. The enzyme catalyses L-tyrosyl-[protein] + UTP = O-(5'-uridylyl)-L-tyrosyl-[protein] + diphosphate. Its function is as follows. Nucleotidyltransferase involved in the post-translational modification of proteins. It can catalyze the addition of adenosine monophosphate (AMP) or uridine monophosphate (UMP) to a protein, resulting in modifications known as AMPylation and UMPylation. The protein is Protein nucleotidyltransferase YdiU of Clostridium botulinum (strain Okra / Type B1).